The sequence spans 938 residues: Isoleucine--tRNA ligase (938 aa).

Positions 58 to 68 (PYANGNIHIGH) match the 'HIGH' region motif. Glu-561 is a binding site for L-isoleucyl-5'-AMP. The short motif at 602 to 606 (KMSKS) is the 'KMSKS' region element. Residue Lys-605 coordinates ATP. The Zn(2+) site is built by Cys-901, Cys-904, Cys-921, and Cys-924.

This sequence belongs to the class-I aminoacyl-tRNA synthetase family. IleS type 1 subfamily. Monomer. The cofactor is Zn(2+).

It localises to the cytoplasm. The enzyme catalyses tRNA(Ile) + L-isoleucine + ATP = L-isoleucyl-tRNA(Ile) + AMP + diphosphate. Its function is as follows. Catalyzes the attachment of isoleucine to tRNA(Ile). As IleRS can inadvertently accommodate and process structurally similar amino acids such as valine, to avoid such errors it has two additional distinct tRNA(Ile)-dependent editing activities. One activity is designated as 'pretransfer' editing and involves the hydrolysis of activated Val-AMP. The other activity is designated 'posttransfer' editing and involves deacylation of mischarged Val-tRNA(Ile). The polypeptide is Isoleucine--tRNA ligase (Yersinia enterocolitica serotype O:8 / biotype 1B (strain NCTC 13174 / 8081)).